Consider the following 124-residue polypeptide: ATP synthase epsilon chain (124 aa).

This sequence belongs to the ATPase epsilon chain family. As to quaternary structure, F-type ATPases have 2 components, CF(1) - the catalytic core - and CF(0) - the membrane proton channel. CF(1) has five subunits: alpha(3), beta(3), gamma(1), delta(1), epsilon(1). CF(0) has three main subunits: a, b and c.

It localises to the cell membrane. Produces ATP from ADP in the presence of a proton gradient across the membrane. This is ATP synthase epsilon chain from Streptomyces avermitilis (strain ATCC 31267 / DSM 46492 / JCM 5070 / NBRC 14893 / NCIMB 12804 / NRRL 8165 / MA-4680).